Here is a 158-residue protein sequence, read N- to C-terminus: Large ribosomal subunit protein uL15 (158 aa).

The span at 1 to 13 shows a compositional bias: basic and acidic residues; it reads MKLNEIKDNEGST. The segment at 1 to 45 is disordered; sequence MKLNEIKDNEGSTHSRKRLGRGIGSGSGKTGGRGVKGQKSRSGVA. Residues 21-35 are compositionally biased toward gly residues; the sequence is RGIGSGSGKTGGRGV.

It belongs to the universal ribosomal protein uL15 family. As to quaternary structure, part of the 50S ribosomal subunit.

Its function is as follows. Binds to the 23S rRNA. The chain is Large ribosomal subunit protein uL15 from Rhizobium johnstonii (strain DSM 114642 / LMG 32736 / 3841) (Rhizobium leguminosarum bv. viciae).